A 243-amino-acid polypeptide reads, in one-letter code: Terpene cyclase janB (243 aa).

A run of 7 helical transmembrane segments spans residues 19–39, 48–68, 77–97, 112–132, 134–154, 172–194, and 205–225; these read LADLFVLGMGLGWVINYVGMV, YGMAIMPLCCNIAWEIVYCVF, LGVFAMGLLINFGVMYAAIIF, LPWIFCIGVLGFLTGHLALAA, IGPSLAYSWGAVVCQLLLSVG, LWLSRFLGSCCTVGFASLRWMYW, and LVLWSLAVFLMVDGSYGVCFW.

The protein belongs to the paxB family.

It localises to the membrane. It participates in secondary metabolite biosynthesis. Functionally, terpene cyclase; part of the gene cluster that mediates the biosynthesis of the indole diterpenes janthitremanes such as shearinine K or shearinine A. The geranylgeranyl diphosphate (GGPP) synthase janG catalyzes the first step in janthitremane biosynthesis via conversion of farnesyl pyrophosphate and isopentyl pyrophosphate into geranylgeranyl pyrophosphate (GGPP). Condensation of indole-3-glycerol phosphate with GGPP by the prenyl transferase janC then forms 3-geranylgeranylindole (3-GGI). Epoxidation by the FAD-dependent monooxygenase janM leads to a epoxidized-GGI that is substrate of the terpene cyclase janB for cyclization to yield paspaline. Paspaline is subsequently converted to 13-desoxypaspaline by the cytochrome P450 monooxygenase janP, via beta-PC-M6 in a series of alpha-face oxidations. The cytochrome P450 monooxygenase janQ is proposed to carry out sequential beta-face oxidation steps at C-7 and C-13 of 13-desoxypaspaline to form paspalicine and paspalinine respectively. The indole diterpene prenyltransferase janD may then convert paspalinine into shearinine K which is substrate of janO and/or additional enzymes for oxidation and cyclization to generate shearinine A. This chain is Terpene cyclase janB, found in Penicillium janthinellum (Penicillium vitale).